The sequence spans 441 residues: MANKYFSSVLKSLLLLLHLVFLSKQHVDSASIVKFLPGFEGPLPFELETGYIGIGEEEEVQLFYYFIKSERNPKEDPLILWLTGGPGCSSISGLLFENGPLTMKLDVYNGTLPSLVSTTYSWTKTSSMIFLDQPVGTGFSYSRTQQFNKPSDSGEAKRIHEFLQKWLGKHQEFSSNPFYVAGDSYSGLVVPATVQEISKGNYECCNPPINLQGYVLGNPLTDYAIDSNSRIPFAHGMALISDELYESLKKTCKGEYTNVHPRNTQCLKFIEEFNKCTNRILQQLILDPLCETETPDCYIYRYLLTTYWANDATVREALQINKESIGEWVRCYRTIPYDNDIKSSMPYHVNNSISGYRSLIYSGDHDLEVPYLGTQAWIRSLNYSIIDDWRPWMIKNQIAGYTRTYANKMTFATIKGGGHTIEFKPEEASIMFQRWINGQPL.

The signal sequence occupies residues 1 to 29 (MANKYFSSVLKSLLLLLHLVFLSKQHVDS). 3 disulfides stabilise this stretch: cysteine 88–cysteine 331, cysteine 252–cysteine 266, and cysteine 290–cysteine 297. Asparagine 109 carries N-linked (GlcNAc...) asparagine glycosylation. The active site involves serine 184. Residue asparagine 350 is glycosylated (N-linked (GlcNAc...) asparagine). Aspartate 366 is a catalytic residue. Asparagine 382 is a glycosylation site (N-linked (GlcNAc...) asparagine). Residue histidine 419 is part of the active site.

The protein belongs to the peptidase S10 family. Expressed in seedlings and roots.

The protein localises to the secreted. Its function is as follows. Probable carboxypeptidase. This chain is Serine carboxypeptidase-like 2 (SCPL2), found in Arabidopsis thaliana (Mouse-ear cress).